The sequence spans 119 residues: Large ribosomal subunit protein uL22 (119 aa).

Belongs to the universal ribosomal protein uL22 family. Part of the 50S ribosomal subunit.

Functionally, this protein binds specifically to 23S rRNA; its binding is stimulated by other ribosomal proteins, e.g. L4, L17, and L20. It is important during the early stages of 50S assembly. It makes multiple contacts with different domains of the 23S rRNA in the assembled 50S subunit and ribosome. Its function is as follows. The globular domain of the protein is located near the polypeptide exit tunnel on the outside of the subunit, while an extended beta-hairpin is found that lines the wall of the exit tunnel in the center of the 70S ribosome. The protein is Large ribosomal subunit protein uL22 of Rickettsia prowazekii (strain Madrid E).